We begin with the raw amino-acid sequence, 274 residues long: Phosphatidylglycerol--prolipoprotein diacylglyceryl transferase (274 aa).

Transmembrane regions (helical) follow at residues 16–36 (VGLHLSWYGIFFSLGIFLSSF), 62–82 (FALGALLVIVIGARAFYVLFY), 94–114 (IIKIWKGGLSSHGAIIALVIW), and 129–149 (LSVTYICDICGAVFGVAALLI). Arg-150 is a binding site for a 1,2-diacyl-sn-glycero-3-phospho-(1'-sn-glycerol). 3 helical membrane-spanning segments follow: residues 184–204 (VQLYEGVSYLLLSLVLYWLCY), 213–233 (GYSAAGALIGVASIRFCAEFF), and 247–267 (LTIGQWLSIPMVFLGIGILWI).

Belongs to the Lgt family.

The protein resides in the cell inner membrane. The catalysed reaction is L-cysteinyl-[prolipoprotein] + a 1,2-diacyl-sn-glycero-3-phospho-(1'-sn-glycerol) = an S-1,2-diacyl-sn-glyceryl-L-cysteinyl-[prolipoprotein] + sn-glycerol 1-phosphate + H(+). It participates in protein modification; lipoprotein biosynthesis (diacylglyceryl transfer). In terms of biological role, catalyzes the transfer of the diacylglyceryl group from phosphatidylglycerol to the sulfhydryl group of the N-terminal cysteine of a prolipoprotein, the first step in the formation of mature lipoproteins. This Chlamydia muridarum (strain MoPn / Nigg) protein is Phosphatidylglycerol--prolipoprotein diacylglyceryl transferase.